The sequence spans 275 residues: Phospholipid scramblase (275 aa).

Residues 256–272 (WKMMLLAFALFLDYMYY) traverse the membrane as a helical segment.

It belongs to the phospholipid scramblase family. In terms of assembly, forms homooligomers in the presence of calcium. It depends on Ca(2+) as a cofactor. The cofactor is Mg(2+).

The protein resides in the membrane. The protein localises to the cell membrane. The enzyme catalyses a 1,2-diacyl-sn-glycero-3-phosphoethanolamine(in) = a 1,2-diacyl-sn-glycero-3-phosphoethanolamine(out). In terms of biological role, catalyzes calcium-induced ATP-independent rapid bidirectional and non-specific movement of phospholipids (lipid scrambling or lipid flip-flop) between the inner and outer leaflet of the plasma membrane resulting in collapse of the phospholipid asymmetry. Preferentially, mediates calcium-dependent phosphatidylethanolamine externalization. During the liver stage, plays a role in the interaction with, and thus invasion of, host hepatocytes. Dispensable for host erythrocyte invasion and asexual parasite development. The chain is Phospholipid scramblase from Plasmodium falciparum (isolate 3D7).